The sequence spans 334 residues: Thioredoxin reductase (334 aa).

Residues 10-13, 39-40, glutamine 44, asparagine 53, valine 86, cysteine 143, aspartate 287, and 294-296 each bind FAD; these read SGPA, IA, and RQA. Cysteine 140 and cysteine 143 are oxidised to a cystine.

It belongs to the class-II pyridine nucleotide-disulfide oxidoreductase family. As to quaternary structure, homodimer. It depends on FAD as a cofactor.

It is found in the cytoplasm. The enzyme catalyses [thioredoxin]-dithiol + NADP(+) = [thioredoxin]-disulfide + NADPH + H(+). The polypeptide is Thioredoxin reductase (cys-9) (Neurospora crassa (strain ATCC 24698 / 74-OR23-1A / CBS 708.71 / DSM 1257 / FGSC 987)).